We begin with the raw amino-acid sequence, 251 residues long: MAGETLRKIQSLLGEMVASFIFGFAVYSAILGSTIAQQPAAKVIIGLTVGFSAIGIIYSFSDVTIAHFNPAITLAAILTGKMGILCGLGYMLAQCVGFILAVCALLVCSPVGYKETLNVIRPAPAPFGADNLNVFFTEFFLTAILVHIAFAVAVNPYRPKVDTDGKFVDPDEKEPVDRRITAPLCIGLTLGFLAFMGLVTSGGAFNPGLTLAPVIMSNTWQHFWLYLGAQYLGGLVGGLLQVFVLYKLSSN.

The Cytoplasmic portion of the chain corresponds to 1–11; it reads MAGETLRKIQS. Residues 12–32 traverse the membrane as a helical segment; that stretch reads LLGEMVASFIFGFAVYSAILG. The Extracellular segment spans residues 33–42; it reads STIAQQPAAK. Residues 43-63 traverse the membrane as a helical segment; it reads VIIGLTVGFSAIGIIYSFSDV. At 64-86 the chain is on the cytoplasmic side; it reads TIAHFNPAITLAAILTGKMGILC. Positions 69 to 71 match the NPA motif; it reads NPA. The chain crosses the membrane as a helical span at residues 87–107; the sequence is GLGYMLAQCVGFILAVCALLV. Residues 108–133 are Extracellular-facing; the sequence is CSPVGYKETLNVIRPAPAPFGADNLN. The chain crosses the membrane as a helical span at residues 134-154; that stretch reads VFFTEFFLTAILVHIAFAVAV. Residues 155–179 lie on the Cytoplasmic side of the membrane; it reads NPYRPKVDTDGKFVDPDEKEPVDRR. The helical transmembrane segment at 180–200 threads the bilayer; that stretch reads ITAPLCIGLTLGFLAFMGLVT. The Extracellular segment spans residues 201–224; the sequence is SGGAFNPGLTLAPVIMSNTWQHFW. The NPG motif lies at 206–208; sequence NPG. The helical transmembrane segment at 225 to 245 threads the bilayer; that stretch reads LYLGAQYLGGLVGGLLQVFVL. Residues 246-251 lie on the Cytoplasmic side of the membrane; sequence YKLSSN.

It belongs to the MIP/aquaporin (TC 1.A.8) family.

Its subcellular location is the cell membrane. Its function is as follows. Water channel required to facilitate the transport of water across membranes. Involved in osmotolerance. The protein is Aquaporin (AQP) of Encephalitozoon hellem (Microsporidian parasite).